Consider the following 200-residue polypeptide: Guanylate kinase (200 aa).

The 180-residue stretch at 4–183 (GAVLIISGPS…AKEAMVAIAR (180 aa)) folds into the Guanylate kinase-like domain. An ATP-binding site is contributed by 11–18 (GPSGCGKS).

Belongs to the guanylate kinase family.

Its subcellular location is the cytoplasm. It catalyses the reaction GMP + ATP = GDP + ADP. Essential for recycling GMP and indirectly, cGMP. The polypeptide is Guanylate kinase (Helicobacter hepaticus (strain ATCC 51449 / 3B1)).